A 275-amino-acid chain; its full sequence is Translation initiation factor 2 subunit alpha (275 aa).

Residues 12 to 83 (GEFVVATVKR…RKGHIDLSLR (72 aa)) form the S1 motif domain.

The protein belongs to the eIF-2-alpha family. Heterotrimer composed of an alpha, a beta and a gamma chain.

Its function is as follows. eIF-2 functions in the early steps of protein synthesis by forming a ternary complex with GTP and initiator tRNA. The chain is Translation initiation factor 2 subunit alpha (eif2a) from Pyrococcus abyssi (strain GE5 / Orsay).